Consider the following 276-residue polypeptide: Undecaprenyl-diphosphatase 2 (276 aa).

Transmembrane regions (helical) follow at residues 1-21, 44-64, 87-107, 114-134, 150-170, 190-210, 220-240, and 251-271; these read MSLW…LFPV, QLLP…LWYF, GHLM…GLLL, VFHD…LLWV, MTFK…IPGF, AAEF…VLEL, LMDA…SVRF, and LASF…WFML.

The protein belongs to the UppP family.

The protein localises to the cell inner membrane. It carries out the reaction di-trans,octa-cis-undecaprenyl diphosphate + H2O = di-trans,octa-cis-undecaprenyl phosphate + phosphate + H(+). Its function is as follows. Catalyzes the dephosphorylation of undecaprenyl diphosphate (UPP). Confers resistance to bacitracin. This Burkholderia ambifaria (strain ATCC BAA-244 / DSM 16087 / CCUG 44356 / LMG 19182 / AMMD) (Burkholderia cepacia (strain AMMD)) protein is Undecaprenyl-diphosphatase 2.